The primary structure comprises 249 residues: DNA polymerase sliding clamp (249 aa).

The protein belongs to the PCNA family. Homotrimer. The subunits circularize to form a toroid; DNA passes through its center. Replication factor C (RFC) is required to load the toroid on the DNA.

Functionally, sliding clamp subunit that acts as a moving platform for DNA processing. Responsible for tethering the catalytic subunit of DNA polymerase and other proteins to DNA during high-speed replication. The chain is DNA polymerase sliding clamp from Nanoarchaeum equitans (strain Kin4-M).